Here is an 87-residue protein sequence, read N- to C-terminus: Small ribosomal subunit protein uS17 (87 aa).

Belongs to the universal ribosomal protein uS17 family. Part of the 30S ribosomal subunit.

Its function is as follows. One of the primary rRNA binding proteins, it binds specifically to the 5'-end of 16S ribosomal RNA. The sequence is that of Small ribosomal subunit protein uS17 from Bacillus mycoides (strain KBAB4) (Bacillus weihenstephanensis).